Reading from the N-terminus, the 640-residue chain is Guanylate-binding protein 4 (640 aa).

A GTPase domain (Globular) region spans residues Met-1–Cys-325. The GB1/RHD3-type G domain maps to Ser-50–Lys-292. GTP contacts are provided by residues Gly-60–Ser-67, Leu-82–Ser-84, and Asp-112–Leu-116. The stretch at Gly-499 to Asp-612 forms a coiled coil.

Belongs to the TRAFAC class dynamin-like GTPase superfamily. GB1/RHD3 GTPase family. GB1 subfamily. As to quaternary structure, heterodimer with other family members, including GBP1, GBP2 and GBP5. Dimerization regulates subcellular location. Interacts with IRF7; preventing interaction between TRAF6 and IRF7, resulting in impaired TRAF6-mediated IRF7 ubiquitination. (Microbial infection) Ubiquitinated by S.flexneri IpaH9.8, leading to its degradation by the proteasome, thereby preventing its ability to promote host defense against bacterial infection.

The protein localises to the golgi apparatus membrane. Its subcellular location is the cytoplasm. The protein resides in the nucleus. It is found in the perinuclear region. It carries out the reaction GTP + H2O = GDP + phosphate + H(+). In terms of biological role, interferon (IFN)-inducible GTPase that plays important roles in innate immunity against a diverse range of bacterial, viral and protozoan pathogens. Negatively regulates the antiviral response by inhibiting activation of IRF7 transcription factor. This is Guanylate-binding protein 4 from Homo sapiens (Human).